Here is a 300-residue protein sequence, read N- to C-terminus: Bifunctional protein FolD 1 (300 aa).

NADP(+) is bound by residues 166-168 (GRS), Ser191, and Ile232.

Belongs to the tetrahydrofolate dehydrogenase/cyclohydrolase family. In terms of assembly, homodimer.

It carries out the reaction (6R)-5,10-methylene-5,6,7,8-tetrahydrofolate + NADP(+) = (6R)-5,10-methenyltetrahydrofolate + NADPH. It catalyses the reaction (6R)-5,10-methenyltetrahydrofolate + H2O = (6R)-10-formyltetrahydrofolate + H(+). It functions in the pathway one-carbon metabolism; tetrahydrofolate interconversion. Functionally, catalyzes the oxidation of 5,10-methylenetetrahydrofolate to 5,10-methenyltetrahydrofolate and then the hydrolysis of 5,10-methenyltetrahydrofolate to 10-formyltetrahydrofolate. The polypeptide is Bifunctional protein FolD 1 (Roseobacter denitrificans (strain ATCC 33942 / OCh 114) (Erythrobacter sp. (strain OCh 114))).